A 252-amino-acid polypeptide reads, in one-letter code: Enolase-phosphatase E1 (252 aa).

2 residues coordinate Mg(2+): aspartate 14 and glutamate 16. Residues 142–143 (SS) and lysine 176 contribute to the substrate site. Mg(2+) is bound at residue aspartate 201.

It belongs to the HAD-like hydrolase superfamily. MasA/MtnC family. As to quaternary structure, monomer. It depends on Mg(2+) as a cofactor.

It localises to the cytoplasm. It is found in the nucleus. The enzyme catalyses 5-methylsulfanyl-2,3-dioxopentyl phosphate + H2O = 1,2-dihydroxy-5-(methylsulfanyl)pent-1-en-3-one + phosphate. Its pathway is amino-acid biosynthesis; L-methionine biosynthesis via salvage pathway; L-methionine from S-methyl-5-thio-alpha-D-ribose 1-phosphate: step 3/6. It participates in amino-acid biosynthesis; L-methionine biosynthesis via salvage pathway; L-methionine from S-methyl-5-thio-alpha-D-ribose 1-phosphate: step 4/6. Functionally, bifunctional enzyme that catalyzes the enolization of 2,3-diketo-5-methylthiopentyl-1-phosphate (DK-MTP-1-P) into the intermediate 2-hydroxy-3-keto-5-methylthiopentenyl-1-phosphate (HK-MTPenyl-1-P), which is then dephosphorylated to form the acireductone 1,2-dihydroxy-3-keto-5-methylthiopentene (DHK-MTPene). The protein is Enolase-phosphatase E1 of Drosophila ananassae (Fruit fly).